The chain runs to 124 residues: Ribonuclease pancreatic A (124 aa).

Residues 1–24 (AESSAMKFERQHVDSGGSSSSNAN) are disordered. Residues Lys7 and Arg10 each coordinate substrate. Catalysis depends on His12, which acts as the Proton acceptor. 4 disulfides stabilise this stretch: Cys26–Cys84, Cys40–Cys95, Cys58–Cys110, and Cys65–Cys72. Substrate is bound by residues 41 to 45 (KPVNT), Lys66, and Arg85. His119 acts as the Proton donor in catalysis.

Belongs to the pancreatic ribonuclease family. Pancreas.

It localises to the secreted. It carries out the reaction an [RNA] containing cytidine + H2O = an [RNA]-3'-cytidine-3'-phosphate + a 5'-hydroxy-ribonucleotide-3'-[RNA].. It catalyses the reaction an [RNA] containing uridine + H2O = an [RNA]-3'-uridine-3'-phosphate + a 5'-hydroxy-ribonucleotide-3'-[RNA].. The chain is Ribonuclease pancreatic A from Cavia porcellus (Guinea pig).